Here is a 218-residue protein sequence, read N- to C-terminus: uncharacterized protein (218 aa).

This is an uncharacterized protein from Orgyia pseudotsugata multicapsid polyhedrosis virus (OpMNPV).